A 195-amino-acid chain; its full sequence is Holliday junction branch migration complex subunit RuvA (195 aa).

Residues 1–61 are domain I; the sequence is MYEYFEGIIS…DTGITLYGFQ (61 aa). The domain II stretch occupies residues 62–140; that stretch reads DQDDKGLFLK…DYVARLDKPE (79 aa). A flexible linker region spans residues 141-146; sequence NGEEIS. A domain III region spans residues 146–195; that stretch reads SPALNDALLALIALGYTQKEVDRITPKLVEIEADTADQYIKKGLALLLKK.

This sequence belongs to the RuvA family. In terms of assembly, homotetramer. Forms an RuvA(8)-RuvB(12)-Holliday junction (HJ) complex. HJ DNA is sandwiched between 2 RuvA tetramers; dsDNA enters through RuvA and exits via RuvB. An RuvB hexamer assembles on each DNA strand where it exits the tetramer. Each RuvB hexamer is contacted by two RuvA subunits (via domain III) on 2 adjacent RuvB subunits; this complex drives branch migration. In the full resolvosome a probable DNA-RuvA(4)-RuvB(12)-RuvC(2) complex forms which resolves the HJ.

Its subcellular location is the cytoplasm. In terms of biological role, the RuvA-RuvB-RuvC complex processes Holliday junction (HJ) DNA during genetic recombination and DNA repair, while the RuvA-RuvB complex plays an important role in the rescue of blocked DNA replication forks via replication fork reversal (RFR). RuvA specifically binds to HJ cruciform DNA, conferring on it an open structure. The RuvB hexamer acts as an ATP-dependent pump, pulling dsDNA into and through the RuvAB complex. HJ branch migration allows RuvC to scan DNA until it finds its consensus sequence, where it cleaves and resolves the cruciform DNA. The polypeptide is Holliday junction branch migration complex subunit RuvA (Lactobacillus acidophilus (strain ATCC 700396 / NCK56 / N2 / NCFM)).